Here is a 31-residue protein sequence, read N- to C-terminus: Photosystem II reaction center protein T (31 aa).

The helical transmembrane segment at 3 to 23 threads the bilayer; sequence ALVYVFLLVGTLMVIFFAIFF.

It belongs to the PsbT family. As to quaternary structure, PSII is composed of 1 copy each of membrane proteins PsbA, PsbB, PsbC, PsbD, PsbE, PsbF, PsbH, PsbI, PsbJ, PsbK, PsbL, PsbM, PsbT, PsbX, PsbY, PsbZ, Psb30/Ycf12, at least 3 peripheral proteins of the oxygen-evolving complex and a large number of cofactors. It forms dimeric complexes.

It is found in the plastid. The protein resides in the chloroplast thylakoid membrane. Functionally, found at the monomer-monomer interface of the photosystem II (PS II) dimer, plays a role in assembly and dimerization of PSII. PSII is a light-driven water plastoquinone oxidoreductase, using light energy to abstract electrons from H(2)O, generating a proton gradient subsequently used for ATP formation. The protein is Photosystem II reaction center protein T of Gracilaria tenuistipitata var. liui (Red alga).